We begin with the raw amino-acid sequence, 178 residues long: Transcription antitermination protein NusB (178 aa).

The protein belongs to the NusB family.

Functionally, involved in transcription antitermination. Required for transcription of ribosomal RNA (rRNA) genes. Binds specifically to the boxA antiterminator sequence of the ribosomal RNA (rrn) operons. In Alkalilimnicola ehrlichii (strain ATCC BAA-1101 / DSM 17681 / MLHE-1), this protein is Transcription antitermination protein NusB.